We begin with the raw amino-acid sequence, 135 residues long: Large ribosomal subunit protein bL12c (135 aa).

It belongs to the bacterial ribosomal protein bL12 family. Homodimer. Part of the ribosomal stalk of the 50S ribosomal subunit. Forms a multimeric L10(L12)X complex, where L10 forms an elongated spine to which 2 to 4 L12 dimers bind in a sequential fashion. Binds GTP-bound translation factors.

It localises to the plastid. It is found in the chloroplast. In terms of biological role, forms part of the ribosomal stalk which helps the ribosome interact with GTP-bound translation factors. Is thus essential for accurate translation. In Chara vulgaris (Common stonewort), this protein is Large ribosomal subunit protein bL12c.